We begin with the raw amino-acid sequence, 243 residues long: Glutathione S-transferase omega-2 (243 aa).

The GST N-terminal domain occupies 22-101 (GLIRIYSMRF…YLDDAYPGRK (80 aa)). Catalysis depends on Cys-32, which acts as the Nucleophile. Residues Lys-59, Ile-72, and 85-86 (ES) contribute to the glutathione site. Residues 106–231 (DPYERARQKM…IFQGFLNLYF (126 aa)) enclose the GST C-terminal domain.

The protein belongs to the GST superfamily. Omega family. Expressed in a range of tissues, including the liver, kidney, skeletal muscle and prostate. Strongest expression in the testis.

The catalysed reaction is RX + glutathione = an S-substituted glutathione + a halide anion + H(+). It catalyses the reaction L-dehydroascorbate + 2 glutathione = glutathione disulfide + L-ascorbate. The enzyme catalyses methylarsonate + 2 glutathione + H(+) = methylarsonous acid + glutathione disulfide + H2O. Exhibits glutathione-dependent thiol transferase activity. Has high dehydroascorbate reductase activity and may contribute to the recycling of ascorbic acid. Participates in the biotransformation of inorganic arsenic and reduces monomethylarsonic acid (MMA). The sequence is that of Glutathione S-transferase omega-2 (GSTO2) from Homo sapiens (Human).